Reading from the N-terminus, the 940-residue chain is Reticulon-3 (940 aa).

Positions M1–T24 are enriched in low complexity. 3 disordered regions span residues M1–P32, S71–H91, and D129–L182. N-acetylalanine is present on A2. At A2 to T771 the chain is on the cytoplasmic side. Phosphoserine is present on S31. A phosphoserine mark is found at S196, S204, S209, S212, S249, and S282. 3 disordered regions span residues A314 to H335, K381 to S405, and E428 to Q512. The span at T430 to T447 shows a compositional bias: acidic residues. Over residues T472–M490 the composition is skewed to basic and acidic residues. Residues Y491–Q512 show a composition bias toward polar residues. Position 508 is a phosphoserine (S508). T572 is subject to Phosphothreonine. A phosphoserine mark is found at S575, S576, and S652. 2 disordered regions span residues N623 to L655 and Q672 to L701. The span at D689–D699 shows a compositional bias: polar residues. Residues V752 to E940 form the Reticulon domain. Residues L772–L795 constitute an intramembrane region (helical). The Cytoplasmic portion of the chain corresponds to S796–L852. An intramembrane region (helical) is located at residues I853–M875. The Cytoplasmic segment spans residues T876–G879. Positions A880–Y902 form an intramembrane region, helical. The interaction with FADD stretch occupies residues V895 to E940. Residues E903–E940 are Cytoplasmic-facing. The interval Q908–D910 is interaction with BACE1.

Homodimer. Interacts with RTN4. Isoform 2 interacts with BACE1, BACE2, BCL2 and FADD. Interacts with ATL2. Interacts with TMEM33. Interacts with ATL1. Interacts with ZFYVE27 and with KIF5A in a ZFYVE27-dependent manner. Interacts with RIGI. Interacts with TRIM25. Present in olfactory bulb, olfactory epithelium and retina (at protein level).

It is found in the endoplasmic reticulum membrane. The protein localises to the golgi apparatus membrane. May be involved in membrane trafficking in the early secretory pathway. Inhibits BACE1 activity and amyloid precursor protein processing. May induce caspase-8 cascade and apoptosis. May favor BCL2 translocation to the mitochondria upon endoplasmic reticulum stress. Induces the formation of endoplasmic reticulum tubules. Acts also as an inflammation-resolving regulator by interacting with both TRIM25 and RIGI, subsequently impairing RIGI 'Lys-63'-linked polyubiquitination leading to IRF3 and NF-kappa-B inhibition. In Rattus norvegicus (Rat), this protein is Reticulon-3 (Rtn3).